A 267-amino-acid chain; its full sequence is MHPMLNIAIRAARKAGNHIAKSLENAEKIQTTQKGSNDFVTNVDKEAEAIIVSTIKSSYPEHCIIAEEGGLIEGKDKEVQWIIDPLDGTTNFVKGFPHFAVSIAVRFRGKTEVACVYDPMTNELFTAQRGAGAQLNNARIRVQPIKDLQGAVLATAFPFKQKQHSESFMKILSAMFVECADFRRTGSAALDLCYLAANRVDGYFELGLKPWDMAAGELIAREAGAIVTDFAGGTDYMQSGNIVASSPRGVKAILQHIRENGNSAILK.

Mg(2+) contacts are provided by glutamate 67, aspartate 84, and leucine 86. Position 67 (glutamate 67) interacts with substrate. Substrate is bound by residues 86-89 (LDGT), arginine 183, and aspartate 212.

The protein belongs to the inositol monophosphatase superfamily. As to quaternary structure, homodimer. The rRNA transcription and antitermination complex (rrnTAC) consists of RNA polymerase (RNAP), NusA, NusB, NusE (rpsJ), NusG, SubB, ribosomal protein S4, DNA and precursor rRNA; S4 is more flexible than other subunits. The cofactor is Mg(2+).

The protein resides in the cytoplasm. It catalyses the reaction a myo-inositol phosphate + H2O = myo-inositol + phosphate. Functionally, part of the processive rRNA transcription and antitermination complex (rrnTAC). The complex forms an RNA-chaperone ring around the RNA exit tunnel of RNA polymerase (RNAP). It supports rapid transcription and antitermination of rRNA operons, cotranscriptional rRNA folding, and annealing of distal rRNA regions to allow correct ribosome biogenesis. This subunit may play a central role in organizing the structure. The polypeptide is Nus factor SuhB (Vibrio cholerae serotype O1 (strain ATCC 39315 / El Tor Inaba N16961)).